The following is a 248-amino-acid chain: 3-deoxy-manno-octulosonate cytidylyltransferase (248 aa).

The protein belongs to the KdsB family.

The protein resides in the cytoplasm. The enzyme catalyses 3-deoxy-alpha-D-manno-oct-2-ulosonate + CTP = CMP-3-deoxy-beta-D-manno-octulosonate + diphosphate. The protein operates within nucleotide-sugar biosynthesis; CMP-3-deoxy-D-manno-octulosonate biosynthesis; CMP-3-deoxy-D-manno-octulosonate from 3-deoxy-D-manno-octulosonate and CTP: step 1/1. It participates in bacterial outer membrane biogenesis; lipopolysaccharide biosynthesis. Functionally, activates KDO (a required 8-carbon sugar) for incorporation into bacterial lipopolysaccharide in Gram-negative bacteria. This chain is 3-deoxy-manno-octulosonate cytidylyltransferase, found in Christiangramia forsetii (strain DSM 17595 / CGMCC 1.15422 / KT0803) (Gramella forsetii).